A 212-amino-acid chain; its full sequence is Uracil phosphoribosyltransferase (212 aa).

5-phospho-alpha-D-ribose 1-diphosphate-binding positions include R78, R103, and 130 to 138; that span reads DPMLATGGS. Residues I193 and 198-200 each bind uracil; that span reads GDA. A 5-phospho-alpha-D-ribose 1-diphosphate-binding site is contributed by D199.

It belongs to the UPRTase family. Mg(2+) serves as cofactor.

The catalysed reaction is UMP + diphosphate = 5-phospho-alpha-D-ribose 1-diphosphate + uracil. It participates in pyrimidine metabolism; UMP biosynthesis via salvage pathway; UMP from uracil: step 1/1. Allosterically activated by GTP. Catalyzes the conversion of uracil and 5-phospho-alpha-D-ribose 1-diphosphate (PRPP) to UMP and diphosphate. This Pseudomonas putida (strain ATCC 700007 / DSM 6899 / JCM 31910 / BCRC 17059 / LMG 24140 / F1) protein is Uracil phosphoribosyltransferase.